Reading from the N-terminus, the 745-residue chain is Ankyrin repeat and protein kinase domain-containing protein 1 (745 aa).

One can recognise a Protein kinase domain in the interval 34–301; that stretch reads EEEWHLVASG…NVAVETDMLL (268 aa). Residues 40–48 and lysine 63 each bind ATP; that span reads VASGGFSKV. Residue aspartate 157 is the Proton acceptor of the active site. 11 ANK repeats span residues 369-398, 402-431, 435-464, 468-497, 501-530, 534-563, 567-596, 600-629, 633-662, 666-695, and 699-728; these read NRVT…DVDC, SGYT…DTNL, DGWA…LVNA, EGWT…DLSP, EGKT…ELDA, NLRT…LPDA, SGYS…SLEL, QGWT…DLDA, MQWT…NPNA, SGWT…DIHA, and VGWT…QVDV.

Belongs to the protein kinase superfamily. TKL Ser/Thr protein kinase family.

It carries out the reaction L-seryl-[protein] + ATP = O-phospho-L-seryl-[protein] + ADP + H(+). It catalyses the reaction L-threonyl-[protein] + ATP = O-phospho-L-threonyl-[protein] + ADP + H(+). The protein is Ankyrin repeat and protein kinase domain-containing protein 1 (Ankk1) of Mus musculus (Mouse).